The primary structure comprises 617 residues: 1-deoxy-D-xylulose-5-phosphate synthase (617 aa).

Thiamine diphosphate-binding positions include H77 and 118-120; that span reads GHS. D149 is a binding site for Mg(2+). Residues 150–151, N178, Y287, and E368 contribute to the thiamine diphosphate site; that span reads GA. N178 contacts Mg(2+).

It belongs to the transketolase family. DXPS subfamily. As to quaternary structure, homodimer. Mg(2+) serves as cofactor. The cofactor is thiamine diphosphate.

It carries out the reaction D-glyceraldehyde 3-phosphate + pyruvate + H(+) = 1-deoxy-D-xylulose 5-phosphate + CO2. It functions in the pathway metabolic intermediate biosynthesis; 1-deoxy-D-xylulose 5-phosphate biosynthesis; 1-deoxy-D-xylulose 5-phosphate from D-glyceraldehyde 3-phosphate and pyruvate: step 1/1. In terms of biological role, catalyzes the acyloin condensation reaction between C atoms 2 and 3 of pyruvate and glyceraldehyde 3-phosphate to yield 1-deoxy-D-xylulose-5-phosphate (DXP). This Haemophilus ducreyi (strain 35000HP / ATCC 700724) protein is 1-deoxy-D-xylulose-5-phosphate synthase.